The sequence spans 197 residues: dTTP/UTP pyrophosphatase (197 aa).

Residue aspartate 70 is the Proton acceptor of the active site.

It belongs to the Maf family. YhdE subfamily. A divalent metal cation serves as cofactor.

Its subcellular location is the cytoplasm. The enzyme catalyses dTTP + H2O = dTMP + diphosphate + H(+). It catalyses the reaction UTP + H2O = UMP + diphosphate + H(+). Functionally, nucleoside triphosphate pyrophosphatase that hydrolyzes dTTP and UTP. May have a dual role in cell division arrest and in preventing the incorporation of modified nucleotides into cellular nucleic acids. This Escherichia coli O6:K15:H31 (strain 536 / UPEC) protein is dTTP/UTP pyrophosphatase (yceF2).